The chain runs to 399 residues: Acetylornithine aminotransferase (399 aa).

Residues 102 to 103 (GA) and Phe-135 each bind pyridoxal 5'-phosphate. Position 138 (Arg-138) interacts with N(2)-acetyl-L-ornithine. 220–223 (DEIQ) is a pyridoxal 5'-phosphate binding site. An N6-(pyridoxal phosphate)lysine modification is found at Lys-249. N(2)-acetyl-L-ornithine is bound at residue Ser-277. Thr-278 is a binding site for pyridoxal 5'-phosphate.

This sequence belongs to the class-III pyridoxal-phosphate-dependent aminotransferase family. ArgD subfamily. In terms of assembly, homodimer. Requires pyridoxal 5'-phosphate as cofactor.

It localises to the cytoplasm. The enzyme catalyses N(2)-acetyl-L-ornithine + 2-oxoglutarate = N-acetyl-L-glutamate 5-semialdehyde + L-glutamate. It participates in amino-acid biosynthesis; L-arginine biosynthesis; N(2)-acetyl-L-ornithine from L-glutamate: step 4/4. The chain is Acetylornithine aminotransferase from Oceanobacillus iheyensis (strain DSM 14371 / CIP 107618 / JCM 11309 / KCTC 3954 / HTE831).